We begin with the raw amino-acid sequence, 267 residues long: Orotidine 5'-phosphate decarboxylase (267 aa).

The Proton donor role is filled by Lys-93.

This sequence belongs to the OMP decarboxylase family. Type 2 subfamily.

The enzyme catalyses orotidine 5'-phosphate + H(+) = UMP + CO2. Its pathway is pyrimidine metabolism; UMP biosynthesis via de novo pathway; UMP from orotate: step 2/2. This chain is Orotidine 5'-phosphate decarboxylase, found in Halobacterium salinarum (strain ATCC 29341 / DSM 671 / R1).